A 176-amino-acid chain; its full sequence is Ribosome rescue factor SmrB (176 aa).

The Smr domain occupies 93 to 168; the sequence is LDLHGYRQSE…GDAALLVLID (76 aa).

This sequence belongs to the SmrB family. As to quaternary structure, associates with collided ribosomes, but not with correctly translating polysomes.

In terms of biological role, acts as a ribosome collision sensor. Detects stalled/collided disomes (pairs of ribosomes where the leading ribosome is stalled and a second ribosome has collided with it) and endonucleolytically cleaves mRNA at the 5' boundary of the stalled ribosome. Stalled/collided disomes form a new interface (primarily via the 30S subunits) that binds SmrB. Cleaved mRNA becomes available for tmRNA ligation, leading to ribosomal subunit dissociation and rescue of stalled ribosomes. In Shewanella baltica (strain OS223), this protein is Ribosome rescue factor SmrB.